The chain runs to 352 residues: Sphingosine 1-phosphate receptor 2 (352 aa).

Residues 1 to 34 (MGGLYSEYLNPEKVQEHYNYTKETLDMQETPSRK) are Extracellular-facing. Asn-19 carries an N-linked (GlcNAc...) asparagine glycan. A helical membrane pass occupies residues 35–59 (VASAFIIILCCAIVVENLLVLIAVA). Topologically, residues 60–66 (RNSKFHS) are cytoplasmic. The chain crosses the membrane as a helical span at residues 67–95 (AMYLFLGNLAASDLLAGVAFVANTLLSGP). At 96 to 109 (VTLSLTPLQWFARE) the chain is on the extracellular side. The helical transmembrane segment at 110–128 (GSAFITLSASVFSLLAIAI) threads the bilayer. The Cytoplasmic portion of the chain corresponds to 129 to 147 (ERQVAIAKVKLYGSDKSCR). A helical transmembrane segment spans residues 148-173 (MLMLIGASWLISLILGGLPILGWNCL). Residues 174–189 (DHLEACSTVLPLYAKH) lie on the Extracellular side of the membrane. Residues 190–210 (YVLCVVTIFSVILLAIVALYV) traverse the membrane as a helical segment. The Cytoplasmic segment spans residues 211–233 (RIYFVVRSSHADVAGPQTLALLK). A helical transmembrane segment spans residues 234-255 (TVTIVLGVFIICWLPAFSILLL). Residues 256-271 (DSTCPVRACPVLYKAH) lie on the Extracellular side of the membrane. A helical membrane pass occupies residues 272–292 (YFFAFATLNSLLNPVIYTWRS). At 293 to 352 (RDLRREVLRPLLCWRQGKGATGRRGGNPGHRLLPLRSSSSLERGLHMPTSPTFLEGNTVV) the chain is on the cytoplasmic side. Residue Cys-305 is the site of S-palmitoyl cysteine attachment.

It belongs to the G-protein coupled receptor 1 family. As to expression, expressed in all developing tissues with highest levels detected in primitive, transformed cells. Relative abundance: lung &gt; kidney = skin = gut &gt; spleen &gt; brain &gt; liver.

It is found in the cell membrane. In terms of biological role, receptor for the lysosphingolipid sphingosine 1-phosphate (S1P). S1P is a bioactive lysophospholipid that elicits diverse physiological effects on most types of cells and tissues. Receptor for the chemokine-like protein FAM19A5. Mediates the inhibitory effect of FAM19A5 on vascular smooth muscle cell proliferation and migration. In lymphoid follicles, couples the binding of S1P to the activation of GNA13 and downstream inhibition of AKT activation leading to suppression of germinal center (GC) B cell growth and migration outside the GC niche. The polypeptide is Sphingosine 1-phosphate receptor 2 (S1pr2) (Rattus norvegicus (Rat)).